The following is a 425-amino-acid chain: Histone-binding protein RBBP4-B (425 aa).

The residue at position 2 (A2) is an N-acetylalanine. WD repeat units follow at residues 32–125 (YDLV…NHEG), 126–175 (EVNR…RLRG), 176–223 (HQKE…KTIF), 225–270 (GHTA…HSVD), 271–314 (AHTA…HSFE), 315–371 (SHKD…FIHG), and 372–404 (GHTAKISDFSWNPNEPWVICSVSEDNIMQVWQM).

The protein belongs to the WD repeat RBAP46/RBAP48/MSI1 family. In terms of assembly, binds directly to histone H4, probably via helix 1 of the histone fold, a region that is not accessible when histone H4 is in chromatin. Probably forms a large corepressor complex that contains ncor1, sin3a, hdac1-A and/or hdac1-B, hdac2, rbbp4-A and/or rbbp4-B and possibly rbbp7.

It is found in the nucleus. It localises to the chromosome. The protein resides in the telomere. Its function is as follows. Core histone-binding subunit that may target chromatin assembly factors, chromatin remodeling factors and histone deacetylases to their histone substrates in a manner that is regulated by nucleosomal DNA. Component of several complexes which regulate chromatin metabolism. The sequence is that of Histone-binding protein RBBP4-B (rbbp4-b) from Xenopus laevis (African clawed frog).